Reading from the N-terminus, the 180-residue chain is NADH-quinone oxidoreductase subunit I (180 aa).

4Fe-4S ferredoxin-type domains lie at 50–80 (LTRD…LQKA) and 90–119 (EFFR…MTPD). Cys60, Cys63, Cys66, Cys70, Cys99, Cys102, Cys105, and Cys109 together coordinate [4Fe-4S] cluster.

Belongs to the complex I 23 kDa subunit family. As to quaternary structure, NDH-1 is composed of 14 different subunits. Subunits NuoA, H, J, K, L, M, N constitute the membrane sector of the complex. [4Fe-4S] cluster is required as a cofactor.

The protein resides in the cell inner membrane. It catalyses the reaction a quinone + NADH + 5 H(+)(in) = a quinol + NAD(+) + 4 H(+)(out). NDH-1 shuttles electrons from NADH, via FMN and iron-sulfur (Fe-S) centers, to quinones in the respiratory chain. The immediate electron acceptor for the enzyme in this species is believed to be ubiquinone. Couples the redox reaction to proton translocation (for every two electrons transferred, four hydrogen ions are translocated across the cytoplasmic membrane), and thus conserves the redox energy in a proton gradient. This Acinetobacter baylyi (strain ATCC 33305 / BD413 / ADP1) protein is NADH-quinone oxidoreductase subunit I.